The sequence spans 121 residues: Small ribosomal subunit protein uS13 (121 aa).

Residues 91 to 121 (HRRGLPVRGQKTKNNARTRKGPVKTVANKKK) form a disordered region.

Belongs to the universal ribosomal protein uS13 family. Part of the 30S ribosomal subunit. Forms a loose heterodimer with protein S19. Forms two bridges to the 50S subunit in the 70S ribosome.

In terms of biological role, located at the top of the head of the 30S subunit, it contacts several helices of the 16S rRNA. In the 70S ribosome it contacts the 23S rRNA (bridge B1a) and protein L5 of the 50S subunit (bridge B1b), connecting the 2 subunits; these bridges are implicated in subunit movement. Contacts the tRNAs in the A and P-sites. This Staphylococcus aureus (strain Mu3 / ATCC 700698) protein is Small ribosomal subunit protein uS13.